The primary structure comprises 193 residues: NADH-quinone oxidoreductase subunit B (193 aa).

Residues 1-25 are disordered; the sequence is MGLNDSSGTLVAPKPKGIIDPNTGR. [4Fe-4S] cluster contacts are provided by Cys72, Cys73, Cys137, and Cys167.

Belongs to the complex I 20 kDa subunit family. In terms of assembly, NDH-1 is composed of 14 different subunits. Subunits NuoB, C, D, E, F, and G constitute the peripheral sector of the complex. [4Fe-4S] cluster is required as a cofactor.

Its subcellular location is the cell inner membrane. The catalysed reaction is a quinone + NADH + 5 H(+)(in) = a quinol + NAD(+) + 4 H(+)(out). NDH-1 shuttles electrons from NADH, via FMN and iron-sulfur (Fe-S) centers, to quinones in the respiratory chain. Couples the redox reaction to proton translocation (for every two electrons transferred, four hydrogen ions are translocated across the cytoplasmic membrane), and thus conserves the redox energy in a proton gradient. The protein is NADH-quinone oxidoreductase subunit B of Mesorhizobium japonicum (strain LMG 29417 / CECT 9101 / MAFF 303099) (Mesorhizobium loti (strain MAFF 303099)).